Here is a 225-residue protein sequence, read N- to C-terminus: Transmembrane protein 40 (225 aa).

Met-1 is subject to N-acetylmethionine. Over residues 1 to 14 (MEASGSSSQSQDSG) the composition is skewed to low complexity. The segment at 1–96 (MEASGSSSQS…RRDSLRGADH (96 aa)) is disordered. Residues 15–29 (GVHRETEDHYQETEL) are compositionally biased toward basic and acidic residues. Basic residues predominate over residues 30 to 39 (HKHHGKARER). Residues 46–68 (SSSSSSSSSSSSSSSSSSSSSSD) are compositionally biased toward low complexity. The segment covering 78–87 (GPRKHRRRPR) has biased composition (basic residues). Ser-129 carries the phosphoserine modification. 2 helical membrane passes run 152 to 172 (FFHFVLLCFAIGALLVCYHYY) and 179 to 199 (LGVGLLTFASLETIGIYFGLV).

The protein resides in the membrane. The chain is Transmembrane protein 40 (Tmem40) from Mus musculus (Mouse).